Reading from the N-terminus, the 291-residue chain is tRNA-uridine aminocarboxypropyltransferase 1 (291 aa).

The tract at residues 158 to 181 (KNSAYEPSSKRPKFSPENDKNTYE) is disordered. The segment covering 171–181 (FSPENDKNTYE) has biased composition (basic and acidic residues). A DXTW motif is present at residues 199–202 (DSTW).

Belongs to the TDD superfamily. DTWD1 family.

It is found in the nucleus. It carries out the reaction a uridine in tRNA + S-adenosyl-L-methionine = a 3-[(3S)-3-amino-3-carboxypropyl]uridine in tRNA + S-methyl-5'-thioadenosine + H(+). Its function is as follows. Catalyzes the formation of 3-(3-amino-3-carboxypropyl)uridine (acp3U) at position 20 in the D-loop of several cytoplasmic tRNAs (acp3U(20)). This is tRNA-uridine aminocarboxypropyltransferase 1 from Xenopus laevis (African clawed frog).